A 660-amino-acid polypeptide reads, in one-letter code: DNA ligase (660 aa).

NAD(+) contacts are provided by residues 33 to 37, 82 to 83, and E110; these read DFVYD and SL. K112 (N6-AMP-lysine intermediate) is an active-site residue. NAD(+)-binding residues include R133, E167, K281, and K305. 4 residues coordinate Zn(2+): C396, C399, C412, and C417. The region spanning 583-660 is the BRCT domain; it reads GENKLLAGKK…SFEDIKSYLD (78 aa).

The protein belongs to the NAD-dependent DNA ligase family. LigA subfamily. Mg(2+) serves as cofactor. Requires Mn(2+) as cofactor.

It carries out the reaction NAD(+) + (deoxyribonucleotide)n-3'-hydroxyl + 5'-phospho-(deoxyribonucleotide)m = (deoxyribonucleotide)n+m + AMP + beta-nicotinamide D-nucleotide.. DNA ligase that catalyzes the formation of phosphodiester linkages between 5'-phosphoryl and 3'-hydroxyl groups in double-stranded DNA using NAD as a coenzyme and as the energy source for the reaction. It is essential for DNA replication and repair of damaged DNA. This Borreliella burgdorferi (strain ZS7) (Borrelia burgdorferi) protein is DNA ligase.